The chain runs to 375 residues: Succinyl-diaminopimelate desuccinylase (375 aa).

Residue H66 participates in Zn(2+) binding. D68 is a catalytic residue. D99 is a binding site for Zn(2+). Residue E133 is the Proton acceptor of the active site. Residues E134, E162, and H348 each contribute to the Zn(2+) site.

This sequence belongs to the peptidase M20A family. DapE subfamily. As to quaternary structure, homodimer. Zn(2+) is required as a cofactor. Requires Co(2+) as cofactor.

The catalysed reaction is N-succinyl-(2S,6S)-2,6-diaminopimelate + H2O = (2S,6S)-2,6-diaminopimelate + succinate. It participates in amino-acid biosynthesis; L-lysine biosynthesis via DAP pathway; LL-2,6-diaminopimelate from (S)-tetrahydrodipicolinate (succinylase route): step 3/3. In terms of biological role, catalyzes the hydrolysis of N-succinyl-L,L-diaminopimelic acid (SDAP), forming succinate and LL-2,6-diaminopimelate (DAP), an intermediate involved in the bacterial biosynthesis of lysine and meso-diaminopimelic acid, an essential component of bacterial cell walls. In Serratia proteamaculans (strain 568), this protein is Succinyl-diaminopimelate desuccinylase.